Consider the following 409-residue polypeptide: Microfibrillar-associated protein 3-like (409 aa).

The signal sequence occupies residues 1–28 (MDRLKSHLTVCFLPSVPFLILVSTLATA). Residues 29-149 (KSVTNSTLNG…LRVIFTSGDM (121 aa)) are Extracellular-facing. N-linked (GlcNAc...) asparagine glycans are attached at residues asparagine 33, asparagine 37, asparagine 67, asparagine 111, and asparagine 135. One can recognise an Ig-like C2-type domain in the interval 47-141 (PVIIARTDHI…GTVNNTVTLR (95 aa)). The cysteines at positions 68 and 125 are disulfide-linked. A helical transmembrane segment spans residues 150–172 (GVYYMVVCLVAFTIVMVLNITRL). The Cytoplasmic portion of the chain corresponds to 173–409 (CMMSSHLKKT…NTCIIYESHV (237 aa)). The residue at position 287 (tyrosine 287) is a Phosphotyrosine; by EGFR. Disordered stretches follow at residues 292–311 (SLKR…LHEQ) and 320–385 (SVHP…VLPP). 4 positions are modified to phosphoserine: serine 298, serine 303, serine 306, and serine 307. Positions 339–355 (EVKDVEETELSAEHSPE) are enriched in basic and acidic residues. The span at 363 to 377 (VTSTELTSEEPTPVE) shows a compositional bias: low complexity.

As to expression, highly expressed in testis.

The protein localises to the cell membrane. It is found in the nucleus. It localises to the cytoplasm. In terms of biological role, may participate in the nuclear signaling of EGFR and MAPK1/ERK2. May a have a role in metastasis. The protein is Microfibrillar-associated protein 3-like (MFAP3L) of Homo sapiens (Human).